A 431-amino-acid chain; its full sequence is Histidine--tRNA ligase (431 aa).

Belongs to the class-II aminoacyl-tRNA synthetase family. As to quaternary structure, homodimer.

It is found in the cytoplasm. The catalysed reaction is tRNA(His) + L-histidine + ATP = L-histidyl-tRNA(His) + AMP + diphosphate + H(+). This Neisseria meningitidis serogroup B (strain ATCC BAA-335 / MC58) protein is Histidine--tRNA ligase.